A 345-amino-acid chain; its full sequence is RNA pseudouridine synthase 1 (345 aa).

Aspartate 134 is an active-site residue.

Belongs to the pseudouridine synthase RluA family.

It catalyses the reaction a uridine in RNA = a pseudouridine in RNA. This is RNA pseudouridine synthase 1 from Oryza sativa subsp. japonica (Rice).